We begin with the raw amino-acid sequence, 157 residues long: Heat shock protein beta-9 (157 aa).

Low complexity predominate over residues 1–17 (MQRVGSSLPSGSQSASQ). 2 disordered regions span residues 1–20 (MQRVGSSLPSGSQSASQCPS) and 136–157 (PPSEAQTGPASRFRSRGSKKLA). Residues 35 to 148 (QRLTEDAAAV…EAQTGPASRF (114 aa)) enclose the sHSP domain. The span at 148 to 157 (FRSRGSKKLA) shows a compositional bias: basic residues.

The protein belongs to the small heat shock protein (HSP20) family.

The protein localises to the cytoplasm. Its subcellular location is the nucleus. The sequence is that of Heat shock protein beta-9 (HSPB9) from Bos taurus (Bovine).